The primary structure comprises 226 residues: Elongation factor 1-delta 2 (226 aa).

The disordered stretch occupies residues 82-131 (TACSVSPTADQKAPAADEEDDDDVDLFGEETEEEKKAAEERAAAVKASGK). Positions 97-113 (ADEEDDDDVDLFGEETE) are enriched in acidic residues. Over residues 114 to 124 (EEKKAAEERAA) the composition is skewed to basic and acidic residues.

It belongs to the EF-1-beta/EF-1-delta family. In terms of assembly, EF-1 is composed of 4 subunits: alpha, beta (1B-alpha=beta'), delta (1B-beta), and gamma (1B-gamma).

In terms of biological role, EF-1-beta and EF-1-beta' stimulate the exchange of GDP bound to EF-1-alpha to GTP. This Oryza sativa subsp. japonica (Rice) protein is Elongation factor 1-delta 2.